A 227-amino-acid chain; its full sequence is Cytidylate kinase (227 aa).

An ATP-binding site is contributed by 12 to 20; it reads GPSGAGKGT.

The protein belongs to the cytidylate kinase family. Type 1 subfamily.

The protein localises to the cytoplasm. It catalyses the reaction CMP + ATP = CDP + ADP. The enzyme catalyses dCMP + ATP = dCDP + ADP. In Salmonella paratyphi A (strain ATCC 9150 / SARB42), this protein is Cytidylate kinase.